The sequence spans 50 residues: Cytochrome c-555 (50 aa).

4 residues coordinate heme: Cys-7, Cys-10, His-11, and Met-25.

Post-translationally, binds 1 heme group per subunit.

It is found in the cell membrane. This is Cytochrome c-555 from Schinkia azotoformans (Bacillus azotoformans).